A 337-amino-acid chain; its full sequence is Probable poly [ADP-ribose] polymerase DDB_G0278045 (337 aa).

The region spanning 21 to 231 (KKWDIIYKQR…NNNKNKNKNN (211 aa)) is the PARP catalytic domain. Residues 218 to 242 (NNTNNNNKNKNKNNNKNNNKNIKIQ) are compositionally biased toward low complexity. The segment at 218-247 (NNTNNNNKNKNKNNNKNNNKNIKIQNENKN) is disordered.

It catalyses the reaction L-aspartyl-[protein] + NAD(+) = 4-O-(ADP-D-ribosyl)-L-aspartyl-[protein] + nicotinamide. The catalysed reaction is L-glutamyl-[protein] + NAD(+) = 5-O-(ADP-D-ribosyl)-L-glutamyl-[protein] + nicotinamide. The enzyme catalyses NAD(+) + (ADP-D-ribosyl)n-acceptor = nicotinamide + (ADP-D-ribosyl)n+1-acceptor + H(+).. In Dictyostelium discoideum (Social amoeba), this protein is Probable poly [ADP-ribose] polymerase DDB_G0278045.